Consider the following 917-residue polypeptide: Isoleucine--tRNA ligase (917 aa).

Residues 57–67 carry the 'HIGH' region motif; the sequence is PYANGNLHMGH. E554 provides a ligand contact to L-isoleucyl-5'-AMP. The 'KMSKS' region signature appears at 595 to 599; that stretch reads KMSKS. An ATP-binding site is contributed by K598. Positions 886, 889, 906, and 909 each coordinate Zn(2+).

It belongs to the class-I aminoacyl-tRNA synthetase family. IleS type 1 subfamily. In terms of assembly, monomer. Requires Zn(2+) as cofactor.

It localises to the cytoplasm. It carries out the reaction tRNA(Ile) + L-isoleucine + ATP = L-isoleucyl-tRNA(Ile) + AMP + diphosphate. Catalyzes the attachment of isoleucine to tRNA(Ile). As IleRS can inadvertently accommodate and process structurally similar amino acids such as valine, to avoid such errors it has two additional distinct tRNA(Ile)-dependent editing activities. One activity is designated as 'pretransfer' editing and involves the hydrolysis of activated Val-AMP. The other activity is designated 'posttransfer' editing and involves deacylation of mischarged Val-tRNA(Ile). The sequence is that of Isoleucine--tRNA ligase from Staphylococcus aureus (strain Mu3 / ATCC 700698).